We begin with the raw amino-acid sequence, 501 residues long: ATP synthase subunit alpha (501 aa).

An ATP-binding site is contributed by 169–176; sequence GDRQTGKT.

Belongs to the ATPase alpha/beta chains family. In terms of assembly, F-type ATPases have 2 components, CF(1) - the catalytic core - and CF(0) - the membrane proton channel. CF(1) has five subunits: alpha(3), beta(3), gamma(1), delta(1), epsilon(1). CF(0) has three main subunits: a(1), b(2) and c(9-12). The alpha and beta chains form an alternating ring which encloses part of the gamma chain. CF(1) is attached to CF(0) by a central stalk formed by the gamma and epsilon chains, while a peripheral stalk is formed by the delta and b chains.

It localises to the cell membrane. The catalysed reaction is ATP + H2O + 4 H(+)(in) = ADP + phosphate + 5 H(+)(out). Functionally, produces ATP from ADP in the presence of a proton gradient across the membrane. The alpha chain is a regulatory subunit. The protein is ATP synthase subunit alpha of Streptococcus equi subsp. zooepidemicus (strain H70).